A 193-amino-acid chain; its full sequence is uncharacterized protein (193 aa).

Residues 55 to 94 (PVGGAAGARSLSQALPAPAPPPPPPPGLGPSSERPWPSPW) form a disordered region. Over residues 71–82 (APAPPPPPPPGL) the composition is skewed to pro residues.

This is an uncharacterized protein from Homo sapiens (Human).